A 189-amino-acid chain; its full sequence is Transcription factor E (189 aa).

Residues 9 to 101 (AVKSLEIYVR…FWRIDSDTIN (93 aa)) form the HTH TFE/IIEalpha-type domain.

The protein belongs to the TFE family. As to quaternary structure, monomer. Interaction with RNA polymerase subunits RpoF and RpoE is necessary for Tfe stimulatory transcription activity. Able to interact with Tbp and RNA polymerase in the absence of DNA promoter. Interacts both with the preinitiation and elongation complexes.

Its function is as follows. Transcription factor that plays a role in the activation of archaeal genes transcribed by RNA polymerase. Facilitates transcription initiation by enhancing TATA-box recognition by TATA-box-binding protein (Tbp), and transcription factor B (Tfb) and RNA polymerase recruitment. Not absolutely required for transcription in vitro, but particularly important in cases where Tbp or Tfb function is not optimal. It dynamically alters the nucleic acid-binding properties of RNA polymerases by stabilizing the initiation complex and destabilizing elongation complexes. Seems to translocate with the RNA polymerase following initiation and acts by binding to the non template strand of the transcription bubble in elongation complexes. This chain is Transcription factor E, found in Aeropyrum pernix (strain ATCC 700893 / DSM 11879 / JCM 9820 / NBRC 100138 / K1).